A 275-amino-acid chain; its full sequence is 2'-N-acetylparomamine deacetylase (275 aa).

The Zn(2+) site is built by histidine 14, aspartate 17, and histidine 166.

It belongs to the PIGL family. Zn(2+) is required as a cofactor.

It catalyses the reaction 2'-N-acetylparomamine + H2O = paromamine + acetate. It participates in antibiotic biosynthesis; butirosin biosynthesis. In terms of biological role, deacetylase involved in the biosynthesis of butirosin by mediating deacetylation of 2'-N-acetylparomamine. This Niallia circulans (Bacillus circulans) protein is 2'-N-acetylparomamine deacetylase (btrD).